The following is a 298-amino-acid chain: Proton-activated chloride channel (298 aa).

The Cytoplasmic portion of the chain corresponds to 1 to 12; sequence MPIGFNKACLKN. A helical membrane pass occupies residues 13-33; it reads VFTVILVLIYLALTAVAVFLA. Topologically, residues 34 to 245 are extracellular; the sequence is YQTISDFMDK…RDPFIQQVKD (212 aa). The chain crosses the membrane as a helical span at residues 246-266; that stretch reads IVTANPWNTIAILCGVFMALF. The Cytoplasmic portion of the chain corresponds to 267-298; it reads KAADFAKLSIKWMIRIRKRHIRAKMREMNQIS.

The protein belongs to the proton-activated chloride channel family.

Its subcellular location is the cell membrane. It catalyses the reaction chloride(in) = chloride(out). Its function is as follows. Chloride channel gated by pH that facilitates the entry of chloride ions into cells upon exposure to extracellular acidic pH. Displays channel activity with distinct kinetic properties compared to the human ortholog channel. The polypeptide is Proton-activated chloride channel (Danio rerio (Zebrafish)).